Reading from the N-terminus, the 127-residue chain is Small ribosomal subunit protein uS13 (127 aa).

It belongs to the universal ribosomal protein uS13 family. As to quaternary structure, part of the 30S ribosomal subunit. Forms a loose heterodimer with protein S19. Forms two bridges to the 50S subunit in the 70S ribosome.

Functionally, located at the top of the head of the 30S subunit, it contacts several helices of the 16S rRNA. In the 70S ribosome it contacts the 23S rRNA (bridge B1a) and protein L5 of the 50S subunit (bridge B1b), connecting the 2 subunits; these bridges are implicated in subunit movement. Contacts the tRNAs in the A and P-sites. The protein is Small ribosomal subunit protein uS13 of Pelagibacter ubique (strain HTCC1062).